Reading from the N-terminus, the 355-residue chain is Isopentenyl-diphosphate delta-isomerase (355 aa).

6-7 (RK) serves as a coordination point for substrate. FMN-binding positions include 62–64 (AMT), Ser93, and Asn122. Residue Gln152 participates in substrate binding. A Mg(2+)-binding site is contributed by Glu153. Residues Lys184, Thr214, 258-259 (GG), and 280-281 (AG) each bind FMN.

Belongs to the IPP isomerase type 2 family. Homooctamer. Dimer of tetramers. The cofactor is FMN. It depends on NADPH as a cofactor. Mg(2+) is required as a cofactor.

The protein localises to the cytoplasm. The catalysed reaction is isopentenyl diphosphate = dimethylallyl diphosphate. Its function is as follows. Involved in the biosynthesis of isoprenoids. Catalyzes the 1,3-allylic rearrangement of the homoallylic substrate isopentenyl (IPP) to its allylic isomer, dimethylallyl diphosphate (DMAPP). The chain is Isopentenyl-diphosphate delta-isomerase from Bacillus pumilus (strain SAFR-032).